Reading from the N-terminus, the 493-residue chain is MERYVLSLDEGTTSARAIIFDRESNIIGLGQYEFPQHYPKPGWVEHNPEEIWDAQFRAIKTALERAKVEPSQIAAIGVTNQRETTIVFDRDGKPLYNAIVWQCRRTAEMVEEIKREYGDMIKGKTGLVPDAYFSASKLKWLLDNVPGLREKAEKGEVLFGTVDTFLIYRLTGEHVTDYSNASRTMLFNIKRLDWDDELLEIFGIPEGILPEVRESSEVYGYTKKELLGAEIPVSGDAGDQQAALFGQAGFETGMVKATYGTGSFILANTGKTVRYSDNLLTTIAWGLNGKVTYALEGSIFVTGAAVQWLRDGIKIIKKASETEELATKLESNEGVYFVPAFVGLGAPYWDQFARGLIIGITRGTGREHLARATLEAIAYLTRDVIEEMEKLVGIKELRVDGGATANDFLMQFQADILNRRVVRPVVKETTALGAAYLAGLAVDYWESLEEIESLWKVEKVFEPGMDEETRRKLYHGWKEAVKRAMGWAKVVGI.

Threonine 12 contributes to the ADP binding site. Residues threonine 12, threonine 13, and serine 14 each contribute to the ATP site. Residue threonine 12 participates in sn-glycerol 3-phosphate binding. Arginine 16 contacts ADP. Sn-glycerol 3-phosphate-binding residues include arginine 82, glutamate 83, tyrosine 132, and aspartate 239. Glycerol-binding residues include arginine 82, glutamate 83, tyrosine 132, aspartate 239, and glutamine 240. ADP-binding residues include threonine 261 and glycine 303. Threonine 261, glycine 303, glutamine 307, and glycine 402 together coordinate ATP. Positions 402 and 406 each coordinate ADP.

The protein belongs to the FGGY kinase family.

It carries out the reaction glycerol + ATP = sn-glycerol 3-phosphate + ADP + H(+). Its pathway is polyol metabolism; glycerol degradation via glycerol kinase pathway; sn-glycerol 3-phosphate from glycerol: step 1/1. Functionally, key enzyme in the regulation of glycerol uptake and metabolism. Catalyzes the phosphorylation of glycerol to yield sn-glycerol 3-phosphate. The polypeptide is Glycerol kinase (Thermococcus gammatolerans (strain DSM 15229 / JCM 11827 / EJ3)).